Reading from the N-terminus, the 118-residue chain is uncharacterized protein (118 aa).

The cysteines at positions 11 and 14 are disulfide-linked.

The protein belongs to the ArsC family.

This is an uncharacterized protein from Bacillus subtilis (strain 168).